The chain runs to 130 residues: Dihydroneopterin aldolase (130 aa).

Residues Glu22, Tyr54, and 73-74 contribute to the substrate site; that span reads IE. The Proton donor/acceptor role is filled by Lys100.

This sequence belongs to the DHNA family.

The catalysed reaction is 7,8-dihydroneopterin = 6-hydroxymethyl-7,8-dihydropterin + glycolaldehyde. Its pathway is cofactor biosynthesis; tetrahydrofolate biosynthesis; 2-amino-4-hydroxy-6-hydroxymethyl-7,8-dihydropteridine diphosphate from 7,8-dihydroneopterin triphosphate: step 3/4. In terms of biological role, catalyzes the conversion of 7,8-dihydroneopterin to 6-hydroxymethyl-7,8-dihydropterin. This is Dihydroneopterin aldolase (folB) from Methylorubrum extorquens (strain ATCC 14718 / DSM 1338 / JCM 2805 / NCIMB 9133 / AM1) (Methylobacterium extorquens).